The primary structure comprises 566 residues: Poly(A) polymerase pla1 (566 aa).

Residues 86–88, 99–101, Asp153, Lys214, Tyr223, and 232–233 contribute to the ATP site; these read YGS, DID, and GV. Mg(2+) contacts are provided by Asp99, Asp101, and Asp153. 2 disordered regions span residues 437–463 and 530–566; these read HEKL…SENG and DEVF…VSTA.

This sequence belongs to the poly(A) polymerase family. It depends on Mg(2+) as a cofactor. The cofactor is Mn(2+).

The protein localises to the nucleus. The catalysed reaction is RNA(n) + ATP = RNA(n)-3'-adenine ribonucleotide + diphosphate. Functionally, polymerase that creates the 3'-poly(A) tail of mRNA's. May acquire specificity through interaction with a cleavage and polyadenylation factor (CF I). The protein is Poly(A) polymerase pla1 (pla1) of Schizosaccharomyces pombe (strain 972 / ATCC 24843) (Fission yeast).